Here is a 136-residue protein sequence, read N- to C-terminus: ATP synthase epsilon chain (136 aa).

The interval 112–136 (GNSADKLKAKESLNKARARSQAVGE) is disordered. Over residues 116–125 (DKLKAKESLN) the composition is skewed to basic and acidic residues.

This sequence belongs to the ATPase epsilon chain family. As to quaternary structure, F-type ATPases have 2 components, CF(1) - the catalytic core - and CF(0) - the membrane proton channel. CF(1) has five subunits: alpha(3), beta(3), gamma(1), delta(1), epsilon(1). CF(0) has three main subunits: a, b and c.

The protein localises to the cellular thylakoid membrane. Functionally, produces ATP from ADP in the presence of a proton gradient across the membrane. This Prochlorococcus marinus (strain SARG / CCMP1375 / SS120) protein is ATP synthase epsilon chain.